We begin with the raw amino-acid sequence, 727 residues long: ATP-dependent RNA helicase Ddx1 (727 aa).

One can recognise a Helicase ATP-binding domain in the interval 2-428; the sequence is TAFEEFGVLP…AERLMHFPTW (427 aa). Residue 46–53 participates in ATP binding; that stretch reads AETGSGKT. A B30.2/SPRY domain is found at 69–246; that stretch reads RDLEEGKAGK…MQFNFGKTDF (178 aa). The DEAD box motif lies at 370–373; the sequence is DEAD. Positions 483–676 constitute a Helicase C-terminal domain; that stretch reads TLSQAVKLLK…QVDKTMDVPV (194 aa).

The protein belongs to the DEAD box helicase family. DDX1 subfamily.

It carries out the reaction ATP + H2O = ADP + phosphate + H(+). In terms of biological role, acts as an ATP-dependent RNA helicase, able to unwind both RNA-RNA and RNA-DNA duplexes. Possesses 5' single-stranded RNA overhang nuclease activity. In Drosophila melanogaster (Fruit fly), this protein is ATP-dependent RNA helicase Ddx1 (Ddx1).